A 78-amino-acid chain; its full sequence is Surfactant-associated protein 2 (78 aa).

The first 19 residues, 1-19, serve as a signal peptide directing secretion; it reads MGAGLPLVLLLTLVGSSQG. Residue asparagine 37 is glycosylated (N-linked (GlcNAc...) asparagine).

In terms of processing, N-glycosylated.

It localises to the secreted. It is found in the cytoplasmic vesicle. The protein localises to the secretory vesicle. Its subcellular location is the golgi apparatus. Putative surfactant protein. This Bos taurus (Bovine) protein is Surfactant-associated protein 2 (SFTA2).